We begin with the raw amino-acid sequence, 98 residues long: DNA-binding protein Fis (98 aa).

The segment at residues 74-93 (QTRAALMLGINRSTLRKKLK) is a DNA-binding region (H-T-H motif).

Belongs to the transcriptional regulatory Fis family. As to quaternary structure, homodimer.

In terms of biological role, activates ribosomal RNA transcription. Plays a direct role in upstream activation of rRNA promoters. In Buchnera aphidicola subsp. Acyrthosiphon pisum (strain 5A), this protein is DNA-binding protein Fis.